The following is a 462-amino-acid chain: Amino-acid permease AapA (462 aa).

12 helical membrane passes run 27–47 (LMAIGGAIGTGLFLGSGKSIH), 48–68 (FAGPSILFAYLITGVFCFFIM), 96–116 (AAFITGWTYWFCWISLAMADL), 134–154 (LPGLLALIILLIMNLATVKLF), 160–180 (WFALIKVIAILALIVTGILLI), 209–229 (GFILSFQMVVFAFVGIELVGL), 252–272 (ILLFYVGALFVIMCIYPWNVL), 279–299 (FVQVFSAVGIVVAASLINFVV), 343–363 (ALFFSSIAILIGVSLNYLMPE), 366–386 (FTLITSVSTICFIFIWGITVI), 410–430 (PLSNYLTLAFLAFILVILALA), and 435–455 (IALFVTPVWFVLLIILYKVQT).

Belongs to the amino acid-polyamine-organocation (APC) superfamily.

Its subcellular location is the cell membrane. In terms of biological role, probable amino-acid or metabolite transport protein. This chain is Amino-acid permease AapA (aapA), found in Bacillus subtilis (strain 168).